The chain runs to 452 residues: MASTSTSANGGSTNASIVSQPVVFTTQTQYPLPYQKYMIPTTWRRYQLSQLVNKALSLVKPVPFDFLIKGEIIRGSLAEWCSEHGVGEEETLEIEYIESVMPPQKMSEIPHEDWVSSVSCQLPRYFLTASYDGNLRAFDLSKNLTASIPAHPAPITSLCLVSSSLLDDNSQQIVIASASHDLTARLTQVALNPMASTNESKAMASLHLHTAPVSSISANAAGTHVLTASWDGLIGYWDATVPSTDEVPEPALNERDRSKKRRRVEEGEVKAKRKAPLSVFKSHTARVSKVLFASGAGETAYSCGFDSTVRRWDTETGVCSHTITASEKPFLDMALTPDGNSALATSTDRSMTLYDLRSSTTILTSASNTYMHPSTPSCVATSATNSHQVVTGAYDGVVRIWDLRSPKSAMATFKPWSGSGQKVLSVDWKRGIVGVGGERGLEMWKVGEEQKV.

Positions 17–98 (IVSQPVVFTT…EETLEIEYIE (82 aa)) are ubiquitin-like (UBL) domain. 3 WD repeats span residues 110 to 148 (PHED…TASI), 150 to 195 (AHPA…NPMA), and 208 to 247 (LHTA…TDEV). A disordered region spans residues 245-269 (DEVPEPALNERDRSKKRRRVEEGEV). Positions 252-269 (LNERDRSKKRRRVEEGEV) are enriched in basic and acidic residues. WD repeat units lie at residues 282–322 (SHTA…CSHT), 325–364 (ASEK…TILT), 371–411 (MHPS…SAMA), and 418–452 (GSGQ…EQKV).

This sequence belongs to the WD repeat WDR12/YTM1 family. Component of the NOP7 complex, composed of ERB1, NOP7 and YTM1. The complex is held together by ERB1, which interacts with NOP7 via its N-terminal domain and with YTM1 via a high-affinity interaction between the seven-bladed beta-propeller domains of the 2 proteins. The NOP7 complex associates with the 66S pre-ribosome. Interacts (via UBL domain) with MDN1 (via VWFA/MIDAS domain).

It localises to the nucleus. Its subcellular location is the nucleolus. The protein resides in the nucleoplasm. Component of the NOP7 complex, which is required for maturation of the 25S and 5.8S ribosomal RNAs and formation of the 60S ribosome. The chain is Ribosome biogenesis protein YTM1 from Laccaria bicolor (strain S238N-H82 / ATCC MYA-4686) (Bicoloured deceiver).